The following is a 778-amino-acid chain: Zinc finger protein 749 (778 aa).

Residues 8-101 (MVFEDVAIYF…ILKDILHLAE (94 aa)) form the KRAB domain. Residues 152–174 (FTCTQGGKDFTASSDLLQQQVLN) form a C2H2-type 1; degenerate zinc finger. The segment at 196–218 (FNSSQGGKDFCHQHGLFEHQKTH) adopts a C2H2-type 2; degenerate zinc-finger fold. The C2H2-type 3; degenerate zinc-finger motif lies at 224–246 (YEFSECGELFRYNSNLIKYQQNH). The C2H2-type 4; degenerate zinc finger occupies 252-274 (YEGTEYGKTFIRKSNLVQHQKIH). 6 C2H2-type zinc fingers span residues 298-320 (YECT…QKTH), 326-348 (YECN…QKVH), 354-376 (YECS…QRVH), 382-404 (FECS…QRVH), 410-432 (YKCS…LKIH), and 438-460 (YECT…QKIH). Lys466 is subject to N6-acetyllysine. 2 C2H2-type zinc fingers span residues 483-505 (YTCS…QKIH) and 511-533 (YECT…EKIH). The residue at position 539 (Lys539) is an N6-acetyllysine. Residues 556 to 578 (YVCSECGKAFLTQAHLDGHQKIQ) form a C2H2-type 13; degenerate zinc finger. 3 consecutive C2H2-type zinc fingers follow at residues 584 to 606 (YECN…QRIH), 612 to 634 (YKCS…QKVH), and 640 to 662 (YECS…QRVH). The C2H2-type 17; atypical zinc finger occupies 668-690 (YECSNCGKFLRYRSTFIKHHKVC). A C2H2-type 18 zinc finger spans residues 696–718 (HECSKCRELFRTKSSLIIHQQSH). The C2H2-type 19; degenerate zinc finger occupies 751-773 (YECGESSKVFKYNSSLIKHQIIH). Glycyl lysine isopeptide (Lys-Gly) (interchain with G-Cter in SUMO2) cross-links involve residues Lys761 and Lys768.

It belongs to the krueppel C2H2-type zinc-finger protein family.

The protein resides in the nucleus. May be involved in transcriptional regulation. The chain is Zinc finger protein 749 (ZNF749) from Homo sapiens (Human).